The following is a 156-amino-acid chain: Ribosomal RNA large subunit methyltransferase H (156 aa).

Residues Leu-73, Gly-104, and Leu-123–Leu-128 each bind S-adenosyl-L-methionine.

It belongs to the RNA methyltransferase RlmH family. In terms of assembly, homodimer.

It is found in the cytoplasm. It catalyses the reaction pseudouridine(1915) in 23S rRNA + S-adenosyl-L-methionine = N(3)-methylpseudouridine(1915) in 23S rRNA + S-adenosyl-L-homocysteine + H(+). Specifically methylates the pseudouridine at position 1915 (m3Psi1915) in 23S rRNA. The chain is Ribosomal RNA large subunit methyltransferase H from Shewanella pealeana (strain ATCC 700345 / ANG-SQ1).